The chain runs to 484 residues: tRNA sulfurtransferase (484 aa).

In terms of domain architecture, THUMP spans alanine 63–lysine 167. Residues leucine 185–isoleucine 186, lysine 267, glycine 289, and glutamine 298 contribute to the ATP site. The cysteines at positions 346 and 458 are disulfide-linked. The 79-residue stretch at phenylalanine 406 to proline 484 folds into the Rhodanese domain. Cysteine 458 acts as the Cysteine persulfide intermediate in catalysis.

This sequence belongs to the ThiI family.

Its subcellular location is the cytoplasm. It catalyses the reaction [ThiI sulfur-carrier protein]-S-sulfanyl-L-cysteine + a uridine in tRNA + 2 reduced [2Fe-2S]-[ferredoxin] + ATP + H(+) = [ThiI sulfur-carrier protein]-L-cysteine + a 4-thiouridine in tRNA + 2 oxidized [2Fe-2S]-[ferredoxin] + AMP + diphosphate. It carries out the reaction [ThiS sulfur-carrier protein]-C-terminal Gly-Gly-AMP + S-sulfanyl-L-cysteinyl-[cysteine desulfurase] + AH2 = [ThiS sulfur-carrier protein]-C-terminal-Gly-aminoethanethioate + L-cysteinyl-[cysteine desulfurase] + A + AMP + 2 H(+). The protein operates within cofactor biosynthesis; thiamine diphosphate biosynthesis. In terms of biological role, catalyzes the ATP-dependent transfer of a sulfur to tRNA to produce 4-thiouridine in position 8 of tRNAs, which functions as a near-UV photosensor. Also catalyzes the transfer of sulfur to the sulfur carrier protein ThiS, forming ThiS-thiocarboxylate. This is a step in the synthesis of thiazole, in the thiamine biosynthesis pathway. The sulfur is donated as persulfide by IscS. The polypeptide is tRNA sulfurtransferase (Psychromonas ingrahamii (strain DSM 17664 / CCUG 51855 / 37)).